The primary structure comprises 499 residues: Maturase K (499 aa).

The protein belongs to the intron maturase 2 family. MatK subfamily.

It is found in the plastid. It localises to the chloroplast. Functionally, usually encoded in the trnK tRNA gene intron. Probably assists in splicing its own and other chloroplast group II introns. This chain is Maturase K, found in Ceratozamia mexicana (Mexican horncone).